We begin with the raw amino-acid sequence, 292 residues long: Glycine--tRNA ligase alpha subunit (292 aa).

This sequence belongs to the class-II aminoacyl-tRNA synthetase family. As to quaternary structure, tetramer of two alpha and two beta subunits.

It localises to the cytoplasm. It catalyses the reaction tRNA(Gly) + glycine + ATP = glycyl-tRNA(Gly) + AMP + diphosphate. This is Glycine--tRNA ligase alpha subunit from Clostridioides difficile (strain 630) (Peptoclostridium difficile).